The chain runs to 299 residues: Prohibitin-2 (299 aa).

Position 2 is an N-acetylalanine (Ala2). A necessary for transcriptional repression region spans residues 19–49 (MGTALKLLLGAGAVAYGVRESVFTVEGGHRA). Tyr128 carries the post-translational modification Phosphotyrosine. Lys147 is modified (N6-acetyllysine). A necessary for transcriptional repression region spans residues 150-174 (ASQLITQRAQVSLLIRRELTERAKD). Ser151 is modified (phosphoserine). Residues 190 to 238 (SREYTAAVEAKQVAQQEAQRAQFLVEKAKQEQRQKIVQAEGEAEAAKML) adopt a coiled-coil conformation. N6-acetyllysine occurs at positions 200, 236, 250, and 262.

The protein belongs to the prohibitin family. The mitochondrial prohibitin complex consists of two subunits (PHB1 and PHB2), assembled into a membrane-associated ring-shaped supercomplex of approximately 1 mDa. Interacts with ESR1, HDAC1 and HDAC5. Interacts with ZNF703. Interacts with STOML2. Interacts with ARFGEF3. Interacts with SPHK2. Interacts with COX4I1; the interaction associates PHB2 with COX. Interacts with MAP1LC3B (membrane-bound form LC3-II); the interaction is direct and upon mitochondrial depolarization and proteasome-dependent outer membrane rupture. Interacts with IGFBP6 (via C-terminal domain). Interacts with CLPB. Interacts with CD86 (via cytoplasmic domain); the interactions increases after priming with CD40. Interacts with AFG3L2. Interacts with DNAJC19. Interacts with AKT2; this interaction may be important for myogenic differentiation. Post-translationally, phosphorylated. Tyrosine phosphorylation is indirectly stimulated by IGFBP6.

Its subcellular location is the mitochondrion inner membrane. The protein resides in the cytoplasm. The protein localises to the nucleus. It localises to the cell membrane. In terms of biological role, protein with pleiotropic attributes mediated in a cell-compartment- and tissue-specific manner, which include the plasma membrane-associated cell signaling functions, mitochondrial chaperone, and transcriptional co-regulator of transcription factors and sex steroid hormones in the nucleus. Functionally, in the mitochondria, together with PHB, forms large ring complexes (prohibitin complexes) in the inner mitochondrial membrane (IMM) and functions as a chaperone protein that stabilizes mitochondrial respiratory enzymes and maintains mitochondrial integrity in the IMM, which is required for mitochondrial morphogenesis, neuronal survival, and normal lifespan. The prohibitin complex, with DNAJC19, regulates cardiolipin remodeling and the protein turnover of OMA1 in a cardiolipin-binding manner. Also regulates cytochrome-c oxidase assembly (COX) and mitochondrial respiration. Binding to sphingoid 1-phosphate (SPP) modulates its regulator activity. Has a key role of mitophagy receptor involved in targeting mitochondria for autophagic degradation. Involved in mitochondrial-mediated antiviral innate immunity, activates RIG-I-mediated signal transduction and production of IFNB1 and pro-inflammatory cytokine IL6. In the nucleus, serves as transcriptional co-regulator. Acts as a mediator of transcriptional repression by nuclear hormone receptors via recruitment of histone deacetylases. Functions as an estrogen receptor (ER)-selective coregulator that potentiates the inhibitory activities of antiestrogens and represses the activity of estrogens. Competes with NCOA1 for modulation of ER transcriptional activity. Its function is as follows. In the plasma membrane, is involved in IGFBP6-induced cell migration. Cooperates with CD86 to mediate CD86-signaling in B lymphocytes that regulates the level of IgG1 produced through the activation of distal signaling intermediates. Upon CD40 engagement, required to activate NF-kappa-B signaling pathway via phospholipase C and protein kinase C activation. The polypeptide is Prohibitin-2 (PHB2) (Pongo abelii (Sumatran orangutan)).